The following is a 405-amino-acid chain: Arginine biosynthesis bifunctional protein ArgJ (405 aa).

Threonine 152, lysine 178, threonine 189, glutamate 276, asparagine 400, and threonine 405 together coordinate substrate. Threonine 189 functions as the Nucleophile in the catalytic mechanism.

It belongs to the ArgJ family. In terms of assembly, heterotetramer of two alpha and two beta chains.

Its subcellular location is the cytoplasm. The enzyme catalyses N(2)-acetyl-L-ornithine + L-glutamate = N-acetyl-L-glutamate + L-ornithine. It catalyses the reaction L-glutamate + acetyl-CoA = N-acetyl-L-glutamate + CoA + H(+). Its pathway is amino-acid biosynthesis; L-arginine biosynthesis; L-ornithine and N-acetyl-L-glutamate from L-glutamate and N(2)-acetyl-L-ornithine (cyclic): step 1/1. It participates in amino-acid biosynthesis; L-arginine biosynthesis; N(2)-acetyl-L-ornithine from L-glutamate: step 1/4. Catalyzes two activities which are involved in the cyclic version of arginine biosynthesis: the synthesis of N-acetylglutamate from glutamate and acetyl-CoA as the acetyl donor, and of ornithine by transacetylation between N(2)-acetylornithine and glutamate. This chain is Arginine biosynthesis bifunctional protein ArgJ, found in Pseudomonas fluorescens (strain Pf0-1).